The chain runs to 313 residues: Porphobilinogen deaminase (313 aa).

At Cys-241 the chain carries S-(dipyrrolylmethanemethyl)cysteine.

Belongs to the HMBS family. Monomer. Dipyrromethane is required as a cofactor.

It catalyses the reaction 4 porphobilinogen + H2O = hydroxymethylbilane + 4 NH4(+). It participates in porphyrin-containing compound metabolism; protoporphyrin-IX biosynthesis; coproporphyrinogen-III from 5-aminolevulinate: step 2/4. In terms of biological role, tetrapolymerization of the monopyrrole PBG into the hydroxymethylbilane pre-uroporphyrinogen in several discrete steps. The polypeptide is Porphobilinogen deaminase (Idiomarina loihiensis (strain ATCC BAA-735 / DSM 15497 / L2-TR)).